A 327-amino-acid chain; its full sequence is Ubiquinone biosynthesis O-methyltransferase, mitochondrial (327 aa).

S-adenosyl-L-methionine-binding residues include R79, G142, D165, and F210. Mg(2+) is bound by residues E211, E214, and H215.

This sequence belongs to the class I-like SAM-binding methyltransferase superfamily. UbiG/COQ3 family. In terms of assembly, component of a multi-subunit COQ enzyme complex, composed of at least COQ3, COQ4, COQ5, COQ6, COQ7 and COQ9. Mg(2+) is required as a cofactor.

The protein resides in the mitochondrion inner membrane. It carries out the reaction a 3,4-dihydroxy-5-(all-trans-polyprenyl)benzoate + S-adenosyl-L-methionine = a 4-hydroxy-3-methoxy-5-(all-trans-polyprenyl)benzoate + S-adenosyl-L-homocysteine + H(+). The enzyme catalyses a 3-demethylubiquinone + S-adenosyl-L-methionine = a ubiquinone + S-adenosyl-L-homocysteine. The catalysed reaction is a 3-demethylubiquinol + S-adenosyl-L-methionine = a ubiquinol + S-adenosyl-L-homocysteine + H(+). It functions in the pathway cofactor biosynthesis; ubiquinone biosynthesis. Its function is as follows. O-methyltransferase required for two non-consecutive steps during ubiquinone biosynthesis. Catalyzes the 2 O-methylation of 3,4-dihydroxy-5-(all-trans-polyprenyl)benzoic acid into 4-hydroxy-3-methoxy-5-(all-trans-polyprenyl)benzoic acid. Also catalyzes the last step of ubiquinone biosynthesis by mediating methylation of 3-demethylubiquinone into ubiquinone. Also able to mediate the methylation of 3-demethylubiquinol into ubiquinol. This is Ubiquinone biosynthesis O-methyltransferase, mitochondrial from Candida albicans (Yeast).